The sequence spans 342 residues: NADPH-dependent methylglyoxal reductase GRE2 (342 aa).

Residues 7–12 (GANGFI), Arg-32, Lys-36, 57–58 (DI), Tyr-165, Lys-169, Val-199, and Ser-216 each bind NADP(+). The Proton donor role is filled by Lys-169. Ser-333 carries the phosphoserine modification.

Belongs to the NAD(P)-dependent epimerase/dehydratase family. Dihydroflavonol-4-reductase subfamily. In terms of assembly, monomer. Post-translationally, the N-terminus is blocked.

The protein resides in the cytoplasm. The protein localises to the nucleus. The enzyme catalyses (S)-lactaldehyde + NADP(+) = methylglyoxal + NADPH + H(+). The catalysed reaction is 3-methylbutanol + NADP(+) = 3-methylbutanal + NADPH + H(+). It carries out the reaction 2,5-hexanedione + 2 NADPH + 2 H(+) = (2S,5S)-hexanediol + 2 NADP(+). It catalyses the reaction (S)-3-chloro-1-phenyl-1-propanol + NADP(+) = 3-chloro-1-phenyl-1-propanone + NADPH + H(+). Activated by glutathione. Functionally, catalyzes the irreversible reduction of the cytotoxic compound methylglyoxal (MG, 2-oxopropanal) to (S)-lactaldehyde as an alternative to detoxification of MG by glyoxalase I GLO1. MG is synthesized via a bypath of glycolysis from dihydroxyacetone phosphate and is believed to play a role in cell cycle regulation and stress adaptation. Also catalyzes the reduction of 3-methylbutanal to 3-methylbutanol. Acts as a suppressor of 3-methylbutanol-induced filamentation by modulating the levels of 3-methylbutanal, the signal to which cells respond by filamentation. Also involved in ergosterol metabolism. The sequence is that of NADPH-dependent methylglyoxal reductase GRE2 (GRE2) from Saccharomyces cerevisiae (strain ATCC 204508 / S288c) (Baker's yeast).